The following is a 93-amino-acid chain: Alpha-defensin 5 (93 aa).

Residues 1-19 form the signal peptide; the sequence is MKTFVLLSALVLLAFQVQA. Residues 20–58 constitute a propeptide that is removed on maturation; the sequence is DPIHKTDEETNTEEQPGEEDQAVSISFGGQEGSALHEEL. Intrachain disulfides connect Cys64-Cys92, Cys66-Cys81, and Cys71-Cys91.

This sequence belongs to the alpha-defensin family.

Its subcellular location is the secreted. In terms of biological role, probably contributes to the antimicrobial barrier function of the small bowel mucosa. This Mus musculus (Mouse) protein is Alpha-defensin 5 (Defa5).